A 579-amino-acid chain; its full sequence is SLAIN motif-containing protein 1 (579 aa).

Disordered regions lie at residues 1–21 (MMAE…GPGP), 60–95 (LLLQ…GPGA), 135–162 (GGGG…PPTL), 233–258 (YTSR…LEDD), 289–313 (STSA…TCSD), and 347–454 (IPHS…PGQI). Residues 9-21 (ASPVAASGAGPGP) show a composition bias toward low complexity. A coiled-coil region spans residues 21 to 56 (PVVNAELEVKKLQELVRKLEKQNEQLRSRAASAAAA). Pro residues predominate over residues 63-73 (QPPPPSAPPPA). The span at 141 to 154 (EPGTAGTPPGEAAT) shows a compositional bias: low complexity. The span at 233 to 243 (YTSRGSPLSPQ) shows a compositional bias: polar residues. Serine 241 bears the Phosphoserine mark. Low complexity-rich tracts occupy residues 244–253 (SSIDSELSTS) and 289–305 (STSA…SLSS). Residues 362–373 (SPSTQYFPSNNF) show a composition bias toward polar residues. The segment covering 374 to 390 (QQPQYYPPQAQTADQQP) has biased composition (low complexity). Over residues 412 to 432 (AAASSNLSSPVTVRSSQSFDS) the composition is skewed to polar residues. Arginine 469 is modified (asymmetric dimethylarginine). A disordered region spans residues 479-516 (SPTVQGSSSSGSSGSSGGSGSGMPLSNGTQLYSTTGIP). The span at 502 to 516 (PLSNGTQLYSTTGIP) shows a compositional bias: polar residues. The residue at position 554 (arginine 554) is an Asymmetric dimethylarginine.

Belongs to the SLAIN motif-containing family. As to quaternary structure, interacts with MAPRE1, MAPRE2, MAPRE3 and CKAP5. Interacts with ZDHHC17 (via ANK repeats). In terms of tissue distribution, expressed in embryonic stem cells. Expressed in adult bone marrow, brain, kidney, lung, testis and thymus. Expressed in colon. Isoform 1 is highly expressed in brain. Isoform 2 is more widely expressed in bone marrow, brain, colon, kidney, lung and thymus.

It localises to the cytoplasm. Its subcellular location is the cytoskeleton. Functionally, microtubule plus-end tracking protein that might be involved in the regulation of cytoplasmic microtubule dynamics, microtubule organization and microtubule elongation. In Mus musculus (Mouse), this protein is SLAIN motif-containing protein 1 (Slain1).